Consider the following 1025-residue polypeptide: Leucyl-cystinyl aminopeptidase (1025 aa).

Met-1 is subject to N-acetylmethionine. Residues Met-1 to Thr-110 are Cytoplasmic-facing. The Dileucine internalization motif signature appears at Leu-53–Leu-54. Phosphotyrosine is present on Tyr-70. The Dileucine internalization motif motif lies at Leu-76 to Leu-77. Residues Ser-80 and Ser-91 each carry the phosphoserine modification. The segment at Arg-96–Gly-101 is tankyrase binding. A helical; Signal-anchor for type II membrane protein membrane pass occupies residues Met-111–Leu-131. The Extracellular portion of the chain corresponds to Pro-132 to Leu-1025. 5 N-linked (GlcNAc...) asparagine glycosylation sites follow: Asn-145, Asn-184, Asn-215, Asn-256, and Asn-266. Glu-295 contributes to the substrate binding site. Residues Asn-368 and Asn-374 are each glycosylated (N-linked (GlcNAc...) asparagine). Gly-428–Asn-432 contributes to the substrate binding site. N-linked (GlcNAc...) asparagine glycosylation is present at Asn-448. His-464 serves as a coordination point for Zn(2+). The active-site Proton acceptor is the Glu-465. His-468 and Glu-487 together coordinate Zn(2+). N-linked (GlcNAc...) asparagine glycosylation is found at Asn-525, Asn-578, Asn-598, Asn-664, Asn-682, Asn-760, Asn-834, Asn-850, and Asn-989.

It belongs to the peptidase M1 family. In terms of assembly, homodimer. Binds tankyrases 1 and 2. It depends on Zn(2+) as a cofactor. In terms of processing, the pregnancy serum form is derived from the membrane-bound form by proteolytic processing. N-glycosylated. In terms of tissue distribution, highly expressed in placenta, heart, kidney and small intestine. Detected at lower levels in neuronal cells in the brain, in skeletal muscle, spleen, liver, testes and colon.

The protein localises to the cell membrane. It is found in the secreted. It carries out the reaction Release of an N-terminal amino acid, Cys-|-Xaa-, in which the half-cystine residue is involved in a disulfide loop, notably in oxytocin or vasopressin. Hydrolysis rates on a range of aminoacyl arylamides exceed that for the cystinyl derivative, however.. Its function is as follows. Release of an N-terminal amino acid, cleaves before cysteine, leucine as well as other amino acids. Degrades peptide hormones such as oxytocin, vasopressin and angiotensin III, and plays a role in maintaining homeostasis during pregnancy. May be involved in the inactivation of neuronal peptides in the brain. Cleaves Met-enkephalin and dynorphin. Binds angiotensin IV and may be the angiotensin IV receptor in the brain. In Homo sapiens (Human), this protein is Leucyl-cystinyl aminopeptidase (LNPEP).